A 1317-amino-acid chain; its full sequence is DNA-directed RNA polymerase subunit beta' (1317 aa).

Positions 214, 286, 293, and 296 each coordinate Zn(2+). A disordered region spans residues 1279–1317; that stretch reads RAYAGTQLSQDDEEFEETYDTDEDDFDMDDDDDFGDDED. The span at 1288 to 1317 shows a compositional bias: acidic residues; sequence QDDEEFEETYDTDEDDFDMDDDDDFGDDED.

Belongs to the RNA polymerase beta' chain family. RpoC2 subfamily. In terms of assembly, in cyanobacteria the RNAP catalytic core is composed of 2 alpha, 1 beta, 1 beta', 1 gamma and 1 omega subunit. When a sigma factor is associated with the core the holoenzyme is formed, which can initiate transcription. Requires Zn(2+) as cofactor.

The enzyme catalyses RNA(n) + a ribonucleoside 5'-triphosphate = RNA(n+1) + diphosphate. In terms of biological role, DNA-dependent RNA polymerase catalyzes the transcription of DNA into RNA using the four ribonucleoside triphosphates as substrates. This Synechocystis sp. (strain ATCC 27184 / PCC 6803 / Kazusa) protein is DNA-directed RNA polymerase subunit beta'.